Reading from the N-terminus, the 148-residue chain is UPF0179 protein Mpal_0949 (148 aa).

Belongs to the UPF0179 family.

The polypeptide is UPF0179 protein Mpal_0949 (Methanosphaerula palustris (strain ATCC BAA-1556 / DSM 19958 / E1-9c)).